Here is a 191-residue protein sequence, read N- to C-terminus: MPPRTLADNFLVPGPTAIAELIVFLLILFIFGKYIVPFVNQKLAERQELIRSQFEEAKRARDEAEAAAAEYRAQLQEIRAEATRVRERAHEEGQQIIAEMKEQARREADRIVRAAEEQIQAERARAVAAVRAEVGSLAVELASRIVGESLADVERQHRIVERFLAELEERAQRQPAASDVVGGQQREEVHR.

The helical transmembrane segment at 10–30 threads the bilayer; it reads FLVPGPTAIAELIVFLLILFI. Residues 170-191 are disordered; sequence RAQRQPAASDVVGGQQREEVHR.

This sequence belongs to the ATPase B chain family. In terms of assembly, F-type ATPases have 2 components, F(1) - the catalytic core - and F(0) - the membrane proton channel. F(1) has five subunits: alpha(3), beta(3), gamma(1), delta(1), epsilon(1). F(0) has three main subunits: a(1), b(2) and c(10-14). The alpha and beta chains form an alternating ring which encloses part of the gamma chain. F(1) is attached to F(0) by a central stalk formed by the gamma and epsilon chains, while a peripheral stalk is formed by the delta and b chains.

The protein resides in the cell membrane. Functionally, f(1)F(0) ATP synthase produces ATP from ADP in the presence of a proton or sodium gradient. F-type ATPases consist of two structural domains, F(1) containing the extramembraneous catalytic core and F(0) containing the membrane proton channel, linked together by a central stalk and a peripheral stalk. During catalysis, ATP synthesis in the catalytic domain of F(1) is coupled via a rotary mechanism of the central stalk subunits to proton translocation. Component of the F(0) channel, it forms part of the peripheral stalk, linking F(1) to F(0). The chain is ATP synthase subunit b from Acidothermus cellulolyticus (strain ATCC 43068 / DSM 8971 / 11B).